The following is a 628-amino-acid chain: MSRSGDRTSTFDPSHSDNLLHGLNLLWRKQLFCDVTLTAQGQQFHCHKAVLASCSQYFRSLFSSHPPLGGGVGGQDGLGAPKDQQQPPQQQPSQQQQPPPQEEPGTPSSSPDDKLLTSPRAINNLVLQGCSSIGLRLVLEYLYTANVTLSLDTVEEVLSVSKILHIPQVTKLCVQFLNDQISVQNYKQVCKIAALHGLEETKKLANKYLVEDVLLLNFEEMRALLDSLPPPVESELALFQMSVLWLEHDRETRMQYAPDLMKRLRFALIPAPELVERVQSVDFMRTDPVCQKLLLDAMNYHLMPFRQHCRQSLASRIRSNKKMLLLVGGLPPGPDRLPSNLVQYYDDEKKTWKILTIMPYNSAHHCVVEVENFLFVLGGEDQWNPNGKHSTNFVSRYDPRFNSWIQLPPMQERRASFYACRLDKHLYVIGGRNETGYLSSVECYNLETNEWRYVSSLPQPLAAHAGAVHNGKIYISGGVHNGEYVPWLYCYDPVMDVWARKQDMNTKRAIHTLAVMNDRLYAIGGNHLKGFSHLDVMLVECYDPKGDQWNILQTPILEGRSGPGCAVLDDSIYLVGGYSWSMGAYKSSTICYCPEKGTWTELEGDVAEPLAGPACVTVILPSCVPYNK.

The region spanning 33-151 (CDVTLTAQGQ…LYTANVTLSL (119 aa)) is the BTB domain. Positions 69–115 (GGGVGGQDGLGAPKDQQQPPQQQPSQQQQPPPQEEPGTPSSSPDDKL) are disordered. Low complexity predominate over residues 84–96 (QQQPPQQQPSQQQ). One can recognise a BACK domain in the interval 210–279 (VEDVLLLNFE…PAPELVERVQ (70 aa)). Kelch repeat units follow at residues 323 to 372 (MLLL…EVEN), 373 to 424 (FLFV…RLDK), 425 to 471 (HLYV…VHNG), 473 to 518 (IYIS…VMND), 520 to 570 (LYAI…VLDD), and 572 to 620 (IYLV…TVIL).

Interacts with TOR1A, preferentially with the ATP-free form.

It is found in the cytoplasm. The protein resides in the cytosol. It localises to the endoplasmic reticulum membrane. The protein is Kelch-like protein 14 (KLHL14) of Homo sapiens (Human).